The following is a 643-amino-acid chain: Threonine--tRNA ligase (643 aa).

Positions 1–61 (MPIITLPDGS…EQDATLEIIT (61 aa)) constitute a TGS domain. Residues 243–534 (DHRKIGKALD…ITEEYAGFFP (292 aa)) are catalytic. 3 residues coordinate Zn(2+): Cys-334, His-385, and His-511.

It belongs to the class-II aminoacyl-tRNA synthetase family. Homodimer. Requires Zn(2+) as cofactor.

The protein resides in the cytoplasm. The enzyme catalyses tRNA(Thr) + L-threonine + ATP = L-threonyl-tRNA(Thr) + AMP + diphosphate + H(+). Its function is as follows. Catalyzes the attachment of threonine to tRNA(Thr) in a two-step reaction: L-threonine is first activated by ATP to form Thr-AMP and then transferred to the acceptor end of tRNA(Thr). Also edits incorrectly charged L-seryl-tRNA(Thr). The sequence is that of Threonine--tRNA ligase from Haemophilus influenzae (strain 86-028NP).